Here is a 184-residue protein sequence, read N- to C-terminus: ATP synthase subunit b, chloroplastic (184 aa).

Residues 27–49 (LATNPINLSVVLGVLIFFGKGVL) traverse the membrane as a helical segment.

It belongs to the ATPase B chain family. F-type ATPases have 2 components, F(1) - the catalytic core - and F(0) - the membrane proton channel. F(1) has five subunits: alpha(3), beta(3), gamma(1), delta(1), epsilon(1). F(0) has four main subunits: a(1), b(1), b'(1) and c(10-14). The alpha and beta chains form an alternating ring which encloses part of the gamma chain. F(1) is attached to F(0) by a central stalk formed by the gamma and epsilon chains, while a peripheral stalk is formed by the delta, b and b' chains.

The protein localises to the plastid. Its subcellular location is the chloroplast thylakoid membrane. Its function is as follows. F(1)F(0) ATP synthase produces ATP from ADP in the presence of a proton or sodium gradient. F-type ATPases consist of two structural domains, F(1) containing the extramembraneous catalytic core and F(0) containing the membrane proton channel, linked together by a central stalk and a peripheral stalk. During catalysis, ATP synthesis in the catalytic domain of F(1) is coupled via a rotary mechanism of the central stalk subunits to proton translocation. Component of the F(0) channel, it forms part of the peripheral stalk, linking F(1) to F(0). The polypeptide is ATP synthase subunit b, chloroplastic (Lepidium virginicum (Virginia pepperweed)).